The primary structure comprises 212 residues: Peptide methionine sulfoxide reductase MsrA (212 aa).

C52 is an active-site residue.

This sequence belongs to the MsrA Met sulfoxide reductase family.

It carries out the reaction L-methionyl-[protein] + [thioredoxin]-disulfide + H2O = L-methionyl-(S)-S-oxide-[protein] + [thioredoxin]-dithiol. The enzyme catalyses [thioredoxin]-disulfide + L-methionine + H2O = L-methionine (S)-S-oxide + [thioredoxin]-dithiol. In terms of biological role, has an important function as a repair enzyme for proteins that have been inactivated by oxidation. Catalyzes the reversible oxidation-reduction of methionine sulfoxide in proteins to methionine. The chain is Peptide methionine sulfoxide reductase MsrA from Yersinia pseudotuberculosis serotype O:1b (strain IP 31758).